A 308-amino-acid chain; its full sequence is Phosphoribosylaminoimidazole-succinocarboxamide synthase (308 aa).

The protein belongs to the SAICAR synthetase family.

It carries out the reaction 5-amino-1-(5-phospho-D-ribosyl)imidazole-4-carboxylate + L-aspartate + ATP = (2S)-2-[5-amino-1-(5-phospho-beta-D-ribosyl)imidazole-4-carboxamido]succinate + ADP + phosphate + 2 H(+). Its pathway is purine metabolism; IMP biosynthesis via de novo pathway; 5-amino-1-(5-phospho-D-ribosyl)imidazole-4-carboxamide from 5-amino-1-(5-phospho-D-ribosyl)imidazole-4-carboxylate: step 1/2. In Xylella fastidiosa (strain Temecula1 / ATCC 700964), this protein is Phosphoribosylaminoimidazole-succinocarboxamide synthase.